We begin with the raw amino-acid sequence, 251 residues long: SNAP25 homologous protein SNAP29 (251 aa).

The disordered stretch occupies residues 1-52; it reads MAPKNSSWNPFDDEKEAAKSFSLNPFDDDDDDKEVEKRFTSSLKPSGGKENQ. Over residues 40–52 the composition is skewed to polar residues; the sequence is TSSLKPSGGKENQ. The t-SNARE coiled-coil homology domain occupies 186 to 248; sequence KTQIAKQDEA…KQSNQRARYL (63 aa).

Belongs to the SNAP-25 family.

It localises to the membrane. The protein localises to the cytoplasm. In terms of biological role, SNAREs, soluble N-ethylmaleimide-sensitive factor-attachment protein receptors, are essential proteins for fusion of cellular membranes. SNAREs localized on opposing membranes assemble to form a trans-SNARE complex, an extended, parallel four alpha-helical bundle that drives membrane fusion. The polypeptide is SNAP25 homologous protein SNAP29 (SNAP29) (Arabidopsis thaliana (Mouse-ear cress)).